The primary structure comprises 200 residues: Protein DMP7 (200 aa).

4 consecutive transmembrane segments (helical) span residues 37-57 (LSNL…PVLT), 69-89 (WLTC…SFTD), 129-149 (ILDF…SMFD), and 167-187 (ILTS…LAFP).

This sequence belongs to the plant DMP1 protein family. In terms of tissue distribution, expressed in leaves, stems, flowers, siliques and roots, especially in the vasculature.

The protein resides in the endoplasmic reticulum membrane. Involved in membrane remodeling. The polypeptide is Protein DMP7 (Arabidopsis thaliana (Mouse-ear cress)).